The chain runs to 351 residues: uncharacterized protein (351 aa).

Mn(2+) contacts are provided by Asp215, Asp226, His290, Glu319, and Glu333.

This sequence belongs to the peptidase M24B family. Requires Mn(2+) as cofactor.

This is an uncharacterized protein from Staphylococcus aureus (strain MW2).